The following is a 98-amino-acid chain: DNA-binding protein Fis (98 aa).

The segment at residues 74–93 is a DNA-binding region (H-T-H motif); sequence QTRAATMLGINRGTLRKKLK.

This sequence belongs to the transcriptional regulatory Fis family. In terms of assembly, homodimer.

Its function is as follows. Activates ribosomal RNA transcription. Plays a direct role in upstream activation of rRNA promoters. This chain is DNA-binding protein Fis, found in Histophilus somni (strain 2336) (Haemophilus somnus).